Consider the following 314-residue polypeptide: Hydroxyacyl-coenzyme A dehydrogenase, mitochondrial (314 aa).

Residues 1–12 (MAFATRQLVRSL) constitute a mitochondrion transit peptide. NAD(+) contacts are provided by residues 34 to 39 (GGGLMG) and aspartate 57. CoA-binding residues include serine 73 and lysine 80. N6-succinyllysine is present on lysine 80. 2 positions are modified to N6-acetyllysine; alternate: lysine 81 and lysine 87. N6-succinyllysine; alternate is present on residues lysine 81 and lysine 87. Glutamate 122 provides a ligand contact to NAD(+). Position 125 is an N6-acetyllysine (lysine 125). Lysine 127 is an NAD(+) binding site. Lysine 127 is subject to N6-(2-hydroxyisobutyryl)lysine. Lysine 136 is modified (N6-acetyllysine; alternate). N6-succinyllysine; alternate is present on lysine 136. Serine 149 and asparagine 173 together coordinate NAD(+). CoA is bound at residue serine 149. At lysine 179 the chain carries N6-acetyllysine. Lysine 185, lysine 192, and lysine 202 each carry N6-acetyllysine; alternate. Residues lysine 185, lysine 192, and lysine 202 each carry the N6-succinyllysine; alternate modification. Lysine 206 carries the N6-succinyllysine modification. N6-acetyllysine; alternate is present on residues lysine 212 and lysine 241. Lysine 212 and lysine 241 each carry N6-succinyllysine; alternate. Residue lysine 305 coordinates NAD(+). Lysine 312 carries the post-translational modification N6-acetyllysine; alternate. At lysine 312 the chain carries N6-succinyllysine; alternate.

It belongs to the 3-hydroxyacyl-CoA dehydrogenase family. In terms of assembly, homodimer. Interacts with GLUD1; this interaction inhibits the activation of glutamate dehydrogenase 1 (GLUD1). Post-translationally, succinylation at Lys-81, adjacent to a coenzyme A binding site. Desuccinylated by SIRT5.

It localises to the mitochondrion matrix. It catalyses the reaction a (3S)-3-hydroxyacyl-CoA + NAD(+) = a 3-oxoacyl-CoA + NADH + H(+). The enzyme catalyses (3S)-3-hydroxybutanoyl-CoA + NAD(+) = acetoacetyl-CoA + NADH + H(+). The catalysed reaction is (3S)-hydroxydecanoyl-CoA + NAD(+) = 3-oxodecanoyl-CoA + NADH + H(+). It carries out the reaction (3S)-hydroxyhexadecanoyl-CoA + NAD(+) = 3-oxohexadecanoyl-CoA + NADH + H(+). Its pathway is lipid metabolism; fatty acid beta-oxidation. Functionally, mitochondrial fatty acid beta-oxidation enzyme that catalyzes the third step of the beta-oxidation cycle for medium and short-chain 3-hydroxy fatty acyl-CoAs (C4 to C10). Plays a role in the control of insulin secretion by inhibiting the activation of glutamate dehydrogenase 1 (GLUD1), an enzyme that has an important role in regulating amino acid-induced insulin secretion. Plays a role in the maintenance of normal spermatogenesis through the reduction of fatty acid accumulation in the testes. The chain is Hydroxyacyl-coenzyme A dehydrogenase, mitochondrial (HADH) from Sus scrofa (Pig).